The primary structure comprises 1249 residues: Clustered mitochondria protein homolog (1249 aa).

Residues 1-34 (MAQTNGELEHSKAETPEQLTNGNHPEETQEEEQN) form a disordered region. The Clu domain occupies 321-565 (DITRSQENYL…RVTPLDVMWQ (245 aa)). 2 disordered regions span residues 610 to 638 (VETASKEKSEENAESKEEGSEEKSEEALD) and 874 to 907 (VPATNGASQEEGKKKKKKGGDSKSPARAASPEKP). A compositionally biased stretch (basic and acidic residues) spans 613 to 638 (ASKEKSEENAESKEEGSEEKSEEALD). TPR repeat units follow at residues 975–1008 (AKLYHQLSMLYYQTDEKEAAVELARKAVIVTERT), 1017–1050 (ILSYLNLSLFEHASGNTKTALVYIKHAMDLWKII), and 1059–1092 (ITTMNNAAVMLQHLKQYSDSRKWFEASLTVCESL). Polar residues predominate over residues 1178–1191 (TRTLGTKVQPQVGQ). The disordered stretch occupies residues 1178-1249 (TRTLGTKVQP…KLRGSKKSSA (72 aa)). Residues 1192-1205 (SAPSASGASSANPS) show a composition bias toward low complexity.

This sequence belongs to the CLU family. In terms of assembly, may associate with the eukaryotic translation initiation factor 3 (eIF-3) complex.

It localises to the cytoplasm. MRNA-binding protein involved in proper cytoplasmic distribution of mitochondria. The protein is Clustered mitochondria protein homolog of Aspergillus oryzae (strain ATCC 42149 / RIB 40) (Yellow koji mold).